A 278-amino-acid polypeptide reads, in one-letter code: Probable septum site-determining protein MinC (278 aa).

The segment at 104 to 167 (RTQQSVDPAP…ASHTPAAPQS (64 aa)) is disordered.

The protein belongs to the MinC family. As to quaternary structure, interacts with MinD and FtsZ.

Cell division inhibitor that blocks the formation of polar Z ring septums. Rapidly oscillates between the poles of the cell to destabilize FtsZ filaments that have formed before they mature into polar Z rings. Prevents FtsZ polymerization. The protein is Probable septum site-determining protein MinC of Bordetella avium (strain 197N).